We begin with the raw amino-acid sequence, 196 residues long: Peroxynitrite isomerase (196 aa).

A GXWXGXG motif is present at residues Gly46 to Gly52. His186 is a binding site for heme b.

Belongs to the nitrobindin family. In terms of assembly, homodimer. Requires heme b as cofactor.

The catalysed reaction is peroxynitrite = nitrate. It participates in nitrogen metabolism. Functionally, heme-binding protein able to scavenge peroxynitrite and to protect free L-tyrosine against peroxynitrite-mediated nitration, by acting as a peroxynitrite isomerase that converts peroxynitrite to nitrate. Therefore, this protein likely plays a role in peroxynitrite sensing and in the detoxification of reactive nitrogen and oxygen species (RNS and ROS, respectively). Is able to bind nitric oxide (NO) in vitro, but may act as a sensor of peroxynitrite levels in vivo. This is Peroxynitrite isomerase from Salinispora tropica (strain ATCC BAA-916 / DSM 44818 / JCM 13857 / NBRC 105044 / CNB-440).